The following is a 253-amino-acid chain: Triosephosphate isomerase (253 aa).

Residue 12–14 (NWK) participates in substrate binding. H100 serves as the catalytic Electrophile. E170 functions as the Proton acceptor in the catalytic mechanism. Substrate is bound by residues G176, S215, and 236 to 237 (GG).

The protein belongs to the triosephosphate isomerase family. Homodimer.

Its subcellular location is the cytoplasm. It catalyses the reaction D-glyceraldehyde 3-phosphate = dihydroxyacetone phosphate. Its pathway is carbohydrate biosynthesis; gluconeogenesis. The protein operates within carbohydrate degradation; glycolysis; D-glyceraldehyde 3-phosphate from glycerone phosphate: step 1/1. In terms of biological role, involved in the gluconeogenesis. Catalyzes stereospecifically the conversion of dihydroxyacetone phosphate (DHAP) to D-glyceraldehyde-3-phosphate (G3P). This is Triosephosphate isomerase from Rhodopseudomonas palustris (strain BisA53).